Consider the following 264-residue polypeptide: 3-deoxy-manno-octulosonate cytidylyltransferase (264 aa).

It belongs to the KdsB family.

It localises to the cytoplasm. The catalysed reaction is 3-deoxy-alpha-D-manno-oct-2-ulosonate + CTP = CMP-3-deoxy-beta-D-manno-octulosonate + diphosphate. It participates in nucleotide-sugar biosynthesis; CMP-3-deoxy-D-manno-octulosonate biosynthesis; CMP-3-deoxy-D-manno-octulosonate from 3-deoxy-D-manno-octulosonate and CTP: step 1/1. It functions in the pathway bacterial outer membrane biogenesis; lipopolysaccharide biosynthesis. Its function is as follows. Activates KDO (a required 8-carbon sugar) for incorporation into bacterial lipopolysaccharide in Gram-negative bacteria. This Marinomonas sp. (strain MWYL1) protein is 3-deoxy-manno-octulosonate cytidylyltransferase.